Here is a 287-residue protein sequence, read N- to C-terminus: 4-diphosphocytidyl-2-C-methyl-D-erythritol kinase (287 aa).

The active site involves lysine 10. An ATP-binding site is contributed by 92-102 (PLAAGLAGGSA). Aspartate 134 is a catalytic residue.

The protein belongs to the GHMP kinase family. IspE subfamily.

The enzyme catalyses 4-CDP-2-C-methyl-D-erythritol + ATP = 4-CDP-2-C-methyl-D-erythritol 2-phosphate + ADP + H(+). It functions in the pathway isoprenoid biosynthesis; isopentenyl diphosphate biosynthesis via DXP pathway; isopentenyl diphosphate from 1-deoxy-D-xylulose 5-phosphate: step 3/6. Functionally, catalyzes the phosphorylation of the position 2 hydroxy group of 4-diphosphocytidyl-2C-methyl-D-erythritol. The sequence is that of 4-diphosphocytidyl-2-C-methyl-D-erythritol kinase from Caldanaerobacter subterraneus subsp. tengcongensis (strain DSM 15242 / JCM 11007 / NBRC 100824 / MB4) (Thermoanaerobacter tengcongensis).